Reading from the N-terminus, the 281-residue chain is Ribosomal RNA small subunit methyltransferase I (281 aa).

Belongs to the methyltransferase superfamily. RsmI family.

The protein localises to the cytoplasm. It carries out the reaction cytidine(1402) in 16S rRNA + S-adenosyl-L-methionine = 2'-O-methylcytidine(1402) in 16S rRNA + S-adenosyl-L-homocysteine + H(+). In terms of biological role, catalyzes the 2'-O-methylation of the ribose of cytidine 1402 (C1402) in 16S rRNA. In Erythrobacter litoralis (strain HTCC2594), this protein is Ribosomal RNA small subunit methyltransferase I.